A 156-amino-acid chain; its full sequence is Small ribosomal subunit protein uS7 (156 aa).

This sequence belongs to the universal ribosomal protein uS7 family. As to quaternary structure, part of the 30S ribosomal subunit. Contacts proteins S9 and S11.

In terms of biological role, one of the primary rRNA binding proteins, it binds directly to 16S rRNA where it nucleates assembly of the head domain of the 30S subunit. Is located at the subunit interface close to the decoding center, probably blocks exit of the E-site tRNA. The chain is Small ribosomal subunit protein uS7 from Geobacter metallireducens (strain ATCC 53774 / DSM 7210 / GS-15).